Reading from the N-terminus, the 805-residue chain is Mediator of RNA polymerase II transcription subunit 25 (805 aa).

Disordered stretches follow at residues 430–455 (GSAQNTQNSAPSSFTSTAPSMSGQTV) and 786–805 (SQSQGSSQGLPITPGGGFMN). Composition is skewed to low complexity over residues 438–451 (SAPSSFTSTAPSMS) and 786–795 (SQSQGSSQGL).

It belongs to the Mediator complex subunit 25 family. Interacts with MYC2 (via N-terminus). MED25 competes with JAZ7 for binding to MYC2.

Functionally, component of the Mediator complex, a coactivator involved in the regulated transcription of nearly all RNA polymerase II-dependent genes. Mediator functions as a bridge to convey information from gene-specific regulatory proteins to the basal RNA polymerase II transcription machinery. Mediator is recruited to promoters by direct interactions with regulatory proteins and serves as a scaffold for the assembly of a functional pre-initiation complex with RNA polymerase II and the general transcription factors. Plays a positive role in wound-induced activation of jasmonate-responsive genes whose promoters are targeted by MYC2. The sequence is that of Mediator of RNA polymerase II transcription subunit 25 from Solanum lycopersicum (Tomato).